The following is a 727-amino-acid chain: DNA replication licensing factor MCM5 (727 aa).

Positions 325 to 531 (VYKNICTKIA…SQDKEIASHI (207 aa)) constitute an MCM domain. ATP is bound at residue 375 to 382 (GDPSTAKS). Positions 507–510 (SRFD) match the Arginine finger motif.

It belongs to the MCM family. As to quaternary structure, component of the minichromosome maintenance (MCM) complex, a heterotetramer composed of MCM2, MCM3, MCM4, MCM5, MCM6 and MCM7. Interacts with EGT1. In terms of tissue distribution, expressed in shoot apex and flower buds.

The protein localises to the nucleus. It is found in the cytoplasm. It carries out the reaction ATP + H2O = ADP + phosphate + H(+). Its function is as follows. Probable component of the MCM2-7 complex (MCM complex) that may function as a DNA helicase and which is essential to undergo a single round of replication initiation and elongation per cell cycle in eukaryotic cells. The chain is DNA replication licensing factor MCM5 (MCM5) from Arabidopsis thaliana (Mouse-ear cress).